We begin with the raw amino-acid sequence, 299 residues long: Putative beta-glucosidase 2 (299 aa).

The first 16 residues, 1 to 16 (MLHCITTIFLSISRMT), serve as a signal peptide directing secretion. Residue 49–50 (NE) coordinates a beta-D-glucoside. E50 (proton donor) is an active-site residue. A disulfide bridge connects residues C69 and C72. N-linked (GlcNAc...) asparagine glycosylation is found at N71 and N76. Y189 contacts a beta-D-glucoside. N222 is a glycosylation site (N-linked (GlcNAc...) asparagine). E255 contributes to the a beta-D-glucoside binding site. Residue E255 is the Nucleophile of the active site. A glycan (N-linked (GlcNAc...) asparagine) is linked at N290.

This sequence belongs to the glycosyl hydrolase 1 family.

It catalyses the reaction Hydrolysis of terminal, non-reducing beta-D-glucosyl residues with release of beta-D-glucose.. This Arabidopsis thaliana (Mouse-ear cress) protein is Putative beta-glucosidase 2.